Here is a 975-residue protein sequence, read N- to C-terminus: MSGIGNKRAAGEPGTSMPPEKKAAVEDSGTTVETIKLGGVSSTEELDIRTLQTKNRKLAEMLDQRQAIEDELREHIEKLERRQATDDASLLIVNRYWSQFDENIRIILKRYDLEQGLGDLLTERKALVVPEPEPDSDSNQERKDDRERGEGQEPAFSFLATLASSSSEEMESQLQERVESSRRAVSQIVTVYDKLQEKVELLSRKLNSGDNLIVEEAVQELNSFLAQENMRLQELTDLLQEKHRTMSQEFSKLQSKVETAESRVSVLESMIDDLQWDIDKIRKREQRLNRHLAEVLERVNSKGYKVYGAGSSLYGGTITINARKFEEMNAELEENKELAQNRLCELEKLRQDFEEVTTQNEKLKVELRSAVEQVVKETPEYRCMQSQFSVLYNESLQLKAHLDEARTLLHGTRGTHQHQVELIERDEVSLHKKLRTEVIQLEDTLAQVRKEYEMLRIEFEQTLAANEQAGPINREMRHLISSLQNHNHQLKGEVLRYKRKLREAQSDLNKTRLRSGSALLQSQSSTEDPKDEPAELKPDSEDLSSQSSASKASQEDANEIKSKRDEEERERERREKEREREREREKEKEREREKQKLKESEKERDSAKDKEKGKHDDGRKKEAEIIKQLKIELKKAQESQKEMKLLLDMYRSAPKEQRDKVQLMAAEKKSKAELEDLRQRLKDLEDKEKKENKKMADEDALRKIRAVEEQIEYLQKKLAMAKQEEEALLSEMDVTGQAFEDMQEQNIRLMQQLREKDDANFKLMSERIKSNQIHKLLKEEKEELADQVLTLKTQVDAQLQVVRKLEEKEHLLQSNIGTGEKELGLRTQALEMNKRKAMEAAQLADDLKAQLELAQKKLHDFQDEIVENSVTKEKDMFNFKRAQEDISRLRRKLETTKKPDNVPKCDEILMEEIKDYKARLTCPCCNMRKKDAVLTKCFHVFCFECVKTRYDTRQRKCPKCNAAFGANDFHRIYIG.

The tract at residues 1-30 is disordered; sequence MSGIGNKRAAGEPGTSMPPEKKAAVEDSGT. K21 carries the post-translational modification N6-acetyllysine. S41 carries the phosphoserine modification. Residues 43-90 adopt a coiled-coil conformation; it reads TEELDIRTLQTKNRKLAEMLDQRQAIEDELREHIEKLERRQATDDASL. The disordered stretch occupies residues 125-155; that stretch reads KALVVPEPEPDSDSNQERKDDRERGEGQEPA. S136 and S138 each carry phosphoserine. Residues 139–151 show a composition bias toward basic and acidic residues; sequence NQERKDDRERGEG. Coiled coils occupy residues 168–375 and 429–898; these read EEME…EQVV and SLHK…TTKK. Residues K348 and K510 each carry the N6-acetyllysine modification. The segment at 507–622 is disordered; that stretch reads DLNKTRLRSG…GKHDDGRKKE (116 aa). A Phosphoserine modification is found at S522. Basic and acidic residues predominate over residues 527-540; sequence EDPKDEPAELKPDS. Residues 543-552 are compositionally biased toward low complexity; sequence LSSQSSASKA. Residues 558–622 are compositionally biased toward basic and acidic residues; the sequence is NEIKSKRDEE…GKHDDGRKKE (65 aa). At S562 the chain carries Phosphoserine. The RING-type zinc finger occupies 922-961; it reads CPCCNMRKKDAVLTKCFHVFCFECVKTRYDTRQRKCPKCN.

This sequence belongs to the BRE1 family. In terms of assembly, component of the RNF20/40 complex (also known as BRE1 complex) probably composed of 2 copies of RNF20/BRE1A and 2 copies of RNF40/BRE1B. Interacts with UBE2E1/UBCH6. Interacts with p53/TP53 and WAC. Interacts with PAF1; the interaction mediates the association of the PAF1 and RNF20/40 complexes which is a prerequsite for recruitment of UBE2A/B. Interacts with isoform 1 and isoform 2 of PA2G4. Interacts with FBXL19. (Microbial infection) Interacts with human herpesvirus 8 (KSHV) protein RTA/ORF50; this interaction targets the SMC5-SMC6 complex for proteasomal degradation. Expressed in the normal brain and also in malignant gliomas (at protein level).

It localises to the nucleus. The enzyme catalyses S-ubiquitinyl-[E2 ubiquitin-conjugating enzyme]-L-cysteine + [acceptor protein]-L-lysine = [E2 ubiquitin-conjugating enzyme]-L-cysteine + N(6)-ubiquitinyl-[acceptor protein]-L-lysine.. It functions in the pathway protein modification; protein ubiquitination. Functionally, component of the RNF20/40 E3 ubiquitin-protein ligase complex that mediates monoubiquitination of 'Lys-120' of histone H2B (H2BK120ub1). H2BK120ub1 gives a specific tag for epigenetic transcriptional activation and is also prerequisite for histone H3 'Lys-4' and 'Lys-79' methylation (H3K4me and H3K79me, respectively). It thereby plays a central role inb histone code and gene regulation. The RNF20/40 complex forms a H2B ubiquitin ligase complex in cooperation with the E2 enzyme UBE2A or UBE2B; reports about the cooperation with UBE2E1/UBCH are contradictory. Required for transcriptional activation of Hox genes. Recruited to the MDM2 promoter, probably by being recruited by p53/TP53, and thereby acts as a transcriptional coactivator. Mediates the polyubiquitination of isoform 2 of PA2G4 in cancer cells leading to its proteasome-mediated degradation. (Microbial infection) Promotes the human herpesvirus 8 (KSHV) lytic cycle by inducing the expression of lytic viral genes including the latency switch gene RTA/ORF50. This chain is E3 ubiquitin-protein ligase BRE1A (RNF20), found in Homo sapiens (Human).